The following is an 899-amino-acid chain: Inner tegument protein (899 aa).

The interval 463–899 is interaction with large tegument protein; the sequence is WNYTWLDATS…SAILDAELSK (437 aa).

This sequence belongs to the herpesviridae inner tegument protein family. Interacts (via C-terminus) with the large tegument protein/LTP (via N-terminus).

The protein localises to the virion tegument. The protein resides in the host cytoplasm. It localises to the host nucleus. Its subcellular location is the host Golgi apparatus. It is found in the host trans-Golgi network. Its function is as follows. Plays an essential role in cytoplasmic secondary envelopment during viral egress. Interacts with the capsid via the large tegument protein/LTP and participates in its transport to the host trans-Golgi network (TGN) where secondary envelopment occurs. Modulates tegumentation and capsid accumulation at the viral assembly complex. The sequence is that of Inner tegument protein (63) from Saimiri sciureus (Common squirrel monkey).